Reading from the N-terminus, the 320-residue chain is Heterogeneous nuclear ribonucleoprotein A1 (320 aa).

M1 is modified (N-acetylmethionine). S2 is modified (N-acetylserine; in Heterogeneous nuclear ribonucleoprotein A1, N-terminally processed). A Phosphoserine modification is found at S2. An N6-acetyllysine; alternate modification is found at K3. K3 participates in a covalent cross-link: Glycyl lysine isopeptide (Lys-Gly) (interchain with G-Cter in SUMO2); alternate. Phosphoserine occurs at positions 4 and 6. The globular A domain stretch occupies residues S4–D94. K8 participates in a covalent cross-link: Glycyl lysine isopeptide (Lys-Gly) (interchain with G-Cter in SUMO2). 2 consecutive RRM domains span residues R14–R97 and K105–Q184. S22 is modified (phosphoserine). K78 participates in a covalent cross-link: Glycyl lysine isopeptide (Lys-Gly) (interchain with G-Cter in SUMO2). The globular B domain stretch occupies residues S95–E185. A Glycyl lysine isopeptide (Lys-Gly) (interchain with G-Cter in SUMO) cross-link involves residue K113. Residues K179 and K183 each participate in a glycyl lysine isopeptide (Lys-Gly) (interchain with G-Cter in SUMO2) cross-link. Residues S188–F216 are disordered. Position 192 is a phosphoserine; by MKNK2 (S192). Asymmetric dimethylarginine; alternate is present on R194. Residue R194 is modified to Dimethylated arginine; alternate. Position 194 is an omega-N-methylarginine; alternate (R194). The span at S197 to F216 shows a compositional bias: gly residues. Position 199 is a phosphoserine (S199). 4 positions are modified to asymmetric dimethylarginine; alternate: R206, R218, R225, and R232. R206 is subject to Dimethylated arginine; alternate. An omega-N-methylarginine; alternate mark is found at R206, R218, R225, and R232. The tract at residues R218–S240 is RNA-binding RGG-box. Position 225 is a dimethylated arginine; alternate (R225). The segment at N268 to Y305 is nuclear targeting sequence. Residues S271–F320 form a disordered region. A compositionally biased stretch (gly residues) spans M276–Q294. R284 carries the post-translational modification Omega-N-methylarginine. S285 carries the phosphoserine modification. K298 is modified (N6-acetyllysine; alternate). Residue K298 forms a Glycyl lysine isopeptide (Lys-Gly) (interchain with G-Cter in SUMO2); alternate linkage. Omega-N-methylarginine is present on R300. Residues S308–F320 show a composition bias toward low complexity. The residue at position 309 (S309) is a Phosphoserine. A phosphoserine; by MKNK2 mark is found at S310, S311, and S312. A phosphoserine mark is found at S313 and S316. At R318 the chain carries Omega-N-methylarginine.

In terms of assembly, identified in the spliceosome C complex. Identified in a IGF2BP1-dependent mRNP granule complex containing untranslated mRNAs. Interacts with SEPT6. Interacts with C9orf72. Interacts with KHDRBS1. Interacts with UBQLN2. Interacts with PPIA/CYPA. Post-translationally, sumoylated.

The protein localises to the nucleus. It is found in the cytoplasm. Functionally, involved in the packaging of pre-mRNA into hnRNP particles, transport of poly(A) mRNA from the nucleus to the cytoplasm and modulation of splice site selection. Plays a role in the splicing of pyruvate kinase PKM by binding repressively to sequences flanking PKM exon 9, inhibiting exon 9 inclusion and resulting in exon 10 inclusion and production of the PKM M2 isoform. Binds to the IRES and thereby inhibits the translation of the apoptosis protease activating factor APAF1. May bind to specific miRNA hairpins. The protein is Heterogeneous nuclear ribonucleoprotein A1 (Hnrnpa1) of Rattus norvegicus (Rat).